The chain runs to 156 residues: ATP synthase subunit b (156 aa).

Residues 7 to 29 (LIAQAISFAILIWFTTKFVWPYL) form a helical membrane-spanning segment.

The protein belongs to the ATPase B chain family. As to quaternary structure, F-type ATPases have 2 components, F(1) - the catalytic core - and F(0) - the membrane proton channel. F(1) has five subunits: alpha(3), beta(3), gamma(1), delta(1), epsilon(1). F(0) has three main subunits: a(1), b(2) and c(10-14). The alpha and beta chains form an alternating ring which encloses part of the gamma chain. F(1) is attached to F(0) by a central stalk formed by the gamma and epsilon chains, while a peripheral stalk is formed by the delta and b chains.

The protein resides in the cell inner membrane. Its function is as follows. F(1)F(0) ATP synthase produces ATP from ADP in the presence of a proton or sodium gradient. F-type ATPases consist of two structural domains, F(1) containing the extramembraneous catalytic core and F(0) containing the membrane proton channel, linked together by a central stalk and a peripheral stalk. During catalysis, ATP synthesis in the catalytic domain of F(1) is coupled via a rotary mechanism of the central stalk subunits to proton translocation. In terms of biological role, component of the F(0) channel, it forms part of the peripheral stalk, linking F(1) to F(0). The protein is ATP synthase subunit b of Methylobacillus flagellatus (strain ATCC 51484 / DSM 6875 / VKM B-1610 / KT).